A 564-amino-acid polypeptide reads, in one-letter code: Pestheic acid cluster transcriptional regulator 3 (564 aa).

The segment at residues 11–38 (CWTCRLRRKKCDEGKPECTTCQALSITC) is a DNA-binding region (zn(2)-C6 fungal-type). Positions 71 to 123 (RTSSRYRVPPGQKANPKLAPKVHAAASTPSTNTSHSTETTPPSDNGFYDTAES) are disordered. Positions 97–113 (STPSTNTSHSTETTPPS) are enriched in polar residues.

Its subcellular location is the nucleus. In terms of biological role, transcription factor that, with ptaR1 and ptaR2, coregulates the expression of the gene cluster that mediates the biosynthesis of pestheic acid, a diphenyl ether which is a biosynthetic precursor of the unique chloropupukeananes. In Pestalotiopsis fici (strain W106-1 / CGMCC3.15140), this protein is Pestheic acid cluster transcriptional regulator 3.